The primary structure comprises 362 residues: 3-dehydroquinate synthase (362 aa).

NAD(+) is bound by residues 71 to 76 (DGEQYK), 105 to 109 (GVVGD), 129 to 130 (TT), Lys-142, Lys-151, and 169 to 172 (CLKT). Zn(2+)-binding residues include Glu-184, His-247, and His-264.

Belongs to the sugar phosphate cyclases superfamily. Dehydroquinate synthase family. NAD(+) serves as cofactor. It depends on Co(2+) as a cofactor. Zn(2+) is required as a cofactor.

It localises to the cytoplasm. The enzyme catalyses 7-phospho-2-dehydro-3-deoxy-D-arabino-heptonate = 3-dehydroquinate + phosphate. Its pathway is metabolic intermediate biosynthesis; chorismate biosynthesis; chorismate from D-erythrose 4-phosphate and phosphoenolpyruvate: step 2/7. In terms of biological role, catalyzes the conversion of 3-deoxy-D-arabino-heptulosonate 7-phosphate (DAHP) to dehydroquinate (DHQ). The polypeptide is 3-dehydroquinate synthase (Shigella flexneri).